Here is a 385-residue protein sequence, read N- to C-terminus: Probable di-N-acetylchitobiase 2 (385 aa).

The N-terminal stretch at 1–15 (MRIILLLFLIVFVVA) is a signal peptide. A GH18 domain is found at 16–377 (QSSSSSSSSG…DALASFFPQS (362 aa)). N-linked (GlcNAc...) asparagine glycans are attached at residues asparagine 51 and asparagine 101. The Proton donor role is filled by glutamate 129. Asparagine 223, asparagine 272, and asparagine 296 each carry an N-linked (GlcNAc...) asparagine glycan.

It belongs to the glycosyl hydrolase 18 family.

The protein localises to the lysosome. Its function is as follows. Involved in the degradation of asparagine-linked glycoproteins. May hydrolyze of N-acetyl-beta-D-glucosamine (1-4)N-acetylglucosamine chitobiose core from the reducing end of the bond. This Dictyostelium discoideum (Social amoeba) protein is Probable di-N-acetylchitobiase 2 (ctbs2).